The sequence spans 651 residues: Histone-lysine N-methyltransferase family member SUVH2 (651 aa).

Positions 1–28 are disordered; sequence MSTLLPFPDLNLMPDSQSSTAGTTAGDT. Over residues 15 to 28 the composition is skewed to low complexity; that stretch reads DSQSSTAGTTAGDT. In terms of domain architecture, YDG spans 202 to 358; the sequence is DKHIVGPVTG…KFRLVRIEGQ (157 aa). The region spanning 434 to 492 is the Pre-SET domain; the sequence is TGCECKLSCTDDCLCARKNGGEFAYDDNGHLLKGKHVVFECGEFCTCGPSCKSRVTQKG. Residues cysteine 436, cysteine 438, cysteine 442, cysteine 446, cysteine 448, cysteine 474, cysteine 478, cysteine 480, and cysteine 484 each contribute to the Zn(2+) site. The 144-residue stretch at 495-638 folds into the SET domain; the sequence is NRLEVFRSKE…PLAELSLDYG (144 aa).

This sequence belongs to the class V-like SAM-binding methyltransferase superfamily. Histone-lysine methyltransferase family. Suvar3-9 subfamily. In terms of assembly, self-interacts. Interacts with DNA-directed RNA polymerase V subunit NRPE1 and with DRD1 and DMS3. Binds to MORC1/CRT1. In terms of tissue distribution, expressed at low levels in leaves stems and flowers.

The protein localises to the nucleus. The protein resides in the chromosome. It is found in the centromere. Its function is as follows. Histone methyltransferase family member that plays a central role in gene silencing. Together with MORC6 and SUVH9, regulates the silencing of some transposable elements (TEs). According to PubMed:15775980, it is required for normal methylation of 'Lys-9' and 'Lys-27' of histone H3, 'Lys-20' of H4, and cytosine, but PubMed:19043555 see no significant effect on histone methylation when the gene is mutated. According to PubMed:19043555, the protein does not bind S-adenosyl-L-methionine and lacks methyltransferase activity. Instead, it may function downstream of DRM2 in RNA-directed DNA methylation, binding to methylated DNA and recruiting DNA-directed RNA polymerase V to chromatin. This is Histone-lysine N-methyltransferase family member SUVH2 (SUVH2) from Arabidopsis thaliana (Mouse-ear cress).